We begin with the raw amino-acid sequence, 430 residues long: MTQLEMARQGIVSDKMKQAAADAGIDAEILRQRIAEGTAIVCHNNMHANGRPLAVGKGLPTRVNANIGTSKDDTSIDNELEKARVAVAAGADAIMDLSTGGPIDEIRRAIIAETQACIGSVPLYQAACDTVVKKGKAIVDMTADEIFDGIKKHLDDGVDFITVHCGVTLSTVERMDNEGRIMDVVSRGGSFTVAWMTHNNAENPLYEQYDRLLELVKPYDATLSLGDGFRPGCLADATDRAQIHELIILGELTQRAWDAGIQVMIEGPGHVPLNQIEANIQLQKSLCHGAPFYVLGPLVTDIAPGYDHITCAIGGAVAAGAGADFLCYVTPSEHLCLPNVQDVHDGVMATRIAAHAADIVKGLPGAMEKDIAMSKARKGLDWETQYCLAIDPELARKRRGESGVDEEHGACTMCGEFCAYKVMDERKPKQ.

Residues Asn-66, Met-95, Tyr-124, His-164, 186-188 (SRG), 227-230 (DGFR), and Glu-266 each bind substrate. His-270 lines the Zn(2+) pocket. Tyr-293 contacts substrate. His-334 contributes to the Zn(2+) binding site. Residues Cys-411, Cys-414, and Cys-418 each contribute to the [4Fe-4S] cluster site.

It belongs to the ThiC family. As to quaternary structure, homodimer. The cofactor is [4Fe-4S] cluster.

The enzyme catalyses 5-amino-1-(5-phospho-beta-D-ribosyl)imidazole + S-adenosyl-L-methionine = 4-amino-2-methyl-5-(phosphooxymethyl)pyrimidine + CO + 5'-deoxyadenosine + formate + L-methionine + 3 H(+). It functions in the pathway cofactor biosynthesis; thiamine diphosphate biosynthesis. In terms of biological role, catalyzes the synthesis of the hydroxymethylpyrimidine phosphate (HMP-P) moiety of thiamine from aminoimidazole ribotide (AIR) in a radical S-adenosyl-L-methionine (SAM)-dependent reaction. The protein is Phosphomethylpyrimidine synthase 2 of Syntrophotalea carbinolica (strain DSM 2380 / NBRC 103641 / GraBd1) (Pelobacter carbinolicus).